The primary structure comprises 123 residues: Large ribosomal subunit protein bL12 (123 aa).

Belongs to the bacterial ribosomal protein bL12 family. As to quaternary structure, homodimer. Part of the ribosomal stalk of the 50S ribosomal subunit. Forms a multimeric L10(L12)X complex, where L10 forms an elongated spine to which 2 to 4 L12 dimers bind in a sequential fashion. Binds GTP-bound translation factors.

Its function is as follows. Forms part of the ribosomal stalk which helps the ribosome interact with GTP-bound translation factors. Is thus essential for accurate translation. This is Large ribosomal subunit protein bL12 from Rhodospirillum rubrum (strain ATCC 11170 / ATH 1.1.1 / DSM 467 / LMG 4362 / NCIMB 8255 / S1).